The sequence spans 171 residues: Peptide deformylase (171 aa).

Cysteine 94 and histidine 136 together coordinate Fe cation. Glutamate 137 is a catalytic residue. Position 140 (histidine 140) interacts with Fe cation.

It belongs to the polypeptide deformylase family. The cofactor is Fe(2+).

The enzyme catalyses N-terminal N-formyl-L-methionyl-[peptide] + H2O = N-terminal L-methionyl-[peptide] + formate. Functionally, removes the formyl group from the N-terminal Met of newly synthesized proteins. Requires at least a dipeptide for an efficient rate of reaction. N-terminal L-methionine is a prerequisite for activity but the enzyme has broad specificity at other positions. This chain is Peptide deformylase, found in Afipia carboxidovorans (strain ATCC 49405 / DSM 1227 / KCTC 32145 / OM5) (Oligotropha carboxidovorans).